The following is a 498-amino-acid chain: MALAGTGVFAEILDGEVYRYYADGEWRTSASGKSVAIVNPTTRKTQYRVQACTQEEVNKAMDAAKVAQKAWARTPLWKRADVLHKAAAILKEHKAPIAECLVKEIAKPAKDAVSEVVRSGDLVSYTAEEGVRILGEGKLVVSDSFPGNERNKYCLSSKIPLGVVLAIPPFNYPANLAGSKIGPALIAGNALVLKPPTQGAVAALHMVHCFHLAGFPKGLISCVTGKGSEIGDFLTMHPGVNCISFTGGDTGIAISKKAGMVPLQMELGGKDACIVLEDADLDLVSANIVKGGFSYSGQRCTAVKVVLIMESIADAVVQKVNAKLAKLKVGPPEDDSDITPVVTESSANFIEGLVMDAKEKGATFCQEYRREGNLIWPLLLDHVRPDMRIAWEEPFGPVLPVIRINSVEEGIHHCNASNFGLQGCIFTRDINKAILISDAMETGTVQINSAPARGPDHFSFQGLKDSGIGSQGITNSINMMTKVKSTVINLPSPSYTMG.

Residues Arg118 and 171–172 contribute to the substrate site; that span reads NY. NADP(+)-binding residues include Lys194, Thr197, and Asp232. 247–251 is a binding site for NAD(+); sequence GGDTG. The active-site Proton acceptor is the Glu266. 299 to 301 provides a ligand contact to substrate; the sequence is RCT. Cys300 serves as the catalytic Nucleophile. Glu393 serves as a coordination point for NADP(+). Arg453 lines the substrate pocket.

Belongs to the aldehyde dehydrogenase family.

It localises to the cytoplasm. The enzyme catalyses D-glyceraldehyde 3-phosphate + NADP(+) + H2O = (2R)-3-phosphoglycerate + NADPH + 2 H(+). Its function is as follows. Important as a means of generating NADPH for biosynthetic reactions. The sequence is that of NADP-dependent glyceraldehyde-3-phosphate dehydrogenase (GPN1) from Zea mays (Maize).